A 514-amino-acid chain; its full sequence is HMG box-containing protein 1 (514 aa).

The disordered stretch occupies residues 150–182 (ARPPPVSSSSKSEPAFPHHHWKEETPVRHERAN). Basic and acidic residues predominate over residues 170-182 (WKEETPVRHERAN). In terms of domain architecture, AXH spans 203–345 (WCNSWPSTVW…PPGHLDAINF (143 aa)). Residues 434-502 (CKRPMNAFML…EQKRLNPDCW (69 aa)) constitute a DNA-binding region (HMG box).

In terms of assembly, binds TCF4. Binds RB1. Binds the second PAH repeat of SIN3A. In terms of processing, ubiquitinated by the CTLH E3 ubiquitin-protein ligase complex, leading to subsequent proteasomal degradation.

It is found in the nucleus. Functionally, transcriptional repressor that binds to the promoter region of target genes. Plays a role in the regulation of the cell cycle and of the Wnt pathway. Binds preferentially to the sequence 5'-TTCATTCATTCA-3'. Binding to the histone H1.0 promoter is enhanced by interaction with RB1. Disrupts the interaction between DNA and TCF4. This chain is HMG box-containing protein 1 (HBP1), found in Pongo abelii (Sumatran orangutan).